Here is a 473-residue protein sequence, read N- to C-terminus: Probable aspartokinase (473 aa).

ACT domains lie at 323–392 (IFGA…FLNN) and 409–473 (VVGA…KTNS).

The protein belongs to the aspartokinase family.

It catalyses the reaction L-aspartate + ATP = 4-phospho-L-aspartate + ADP. The protein operates within amino-acid biosynthesis; L-lysine biosynthesis via DAP pathway; (S)-tetrahydrodipicolinate from L-aspartate: step 1/4. It participates in amino-acid biosynthesis; L-methionine biosynthesis via de novo pathway; L-homoserine from L-aspartate: step 1/3. Its pathway is amino-acid biosynthesis; L-threonine biosynthesis; L-threonine from L-aspartate: step 1/5. This is Probable aspartokinase from Methanocaldococcus jannaschii (strain ATCC 43067 / DSM 2661 / JAL-1 / JCM 10045 / NBRC 100440) (Methanococcus jannaschii).